Consider the following 447-residue polypeptide: MKPVVALVGRPNVGKSTLFNRLTKSRDAIVADFAGLTRDRHYGNAKQGKHEFIVIDTGGFEPDAAGGIFKEMAKQTTQAVAEADVVIFVVDAREGISAQDHEIAKYLRRLGKPCVLAANKAEGMLAGAQLVEFFELGLGEVHAISAAHGQGIRTLVDLALAPLHLEDQDDADEQREPGIIKLAVAGRPNVGKSTLINTWLGEERLVAFDLPGTTRDAISVPFERNGQKFELVDTAGLRRRGKVFEAIEKFSVVKTLQAIESSNVVLLLIDATQGVTDQDAHIAGYILENGRAVVIAVNKWDAVDEYQRELVKRSIETRLPFLKFATMHLISATKRQGLGPLWASIAQAYKAANCKMSTPILTRLLLEAVQFQSPKRSGMFRPKLRYAHQGGMNPPVIIIHGNSLEHVTDAYKRFLEGRFRKEFDLVGTPMRIEFKSSTNPYADKATA.

EngA-type G domains are found at residues 3-167 (PVVA…HLED) and 180-353 (IKLA…KAAN). Residues 9–16 (GRPNVGKS), 56–60 (DTGGF), 119–122 (NKAE), 186–193 (GRPNVGKS), 233–237 (DTAGL), and 298–301 (NKWD) each bind GTP. One can recognise a KH-like domain in the interval 354–438 (CKMSTPILTR…PMRIEFKSST (85 aa)).

The protein belongs to the TRAFAC class TrmE-Era-EngA-EngB-Septin-like GTPase superfamily. EngA (Der) GTPase family. As to quaternary structure, associates with the 50S ribosomal subunit.

GTPase that plays an essential role in the late steps of ribosome biogenesis. The sequence is that of GTPase Der from Albidiferax ferrireducens (strain ATCC BAA-621 / DSM 15236 / T118) (Rhodoferax ferrireducens).